The chain runs to 309 residues: Maintenance of mitochondrial morphology protein 1 (309 aa).

Topologically, residues 1-16 (MGNAYIFSLQPTFTQG) are lumenal. The helical transmembrane segment at 17-37 (LILGQFSILFLLVLVLKYLFF) threads the bilayer. Over 38-309 (DTVSDHAYRT…EQQAGELPVN (272 aa)) the chain is Cytoplasmic. Residues 84 to 293 (ECESADWLNA…LPGLASVSEV (210 aa)) enclose the SMP-LTD domain.

This sequence belongs to the MMM1 family. As to quaternary structure, homodimer. Component of the ER-mitochondria encounter structure (ERMES) or MDM complex, composed of MMM1, MDM10, MDM12 and MDM34. An MMM1 homodimer associates with one molecule of MDM12 on each side in a pairwise head-to-tail manner, and the SMP-LTD domains of MMM1 and MDM12 generate a continuous hydrophobic tunnel for phospholipid trafficking.

The protein localises to the endoplasmic reticulum membrane. Functionally, component of the ERMES/MDM complex, which serves as a molecular tether to connect the endoplasmic reticulum (ER) and mitochondria. Components of this complex are involved in the control of mitochondrial shape and protein biogenesis, and function in nonvesicular lipid trafficking between the ER and mitochondria. The MDM12-MMM1 subcomplex functions in the major beta-barrel assembly pathway that is responsible for biogenesis of all outer membrane beta-barrel proteins, and acts in a late step after the SAM complex. The MDM10-MDM12-MMM1 subcomplex further acts in the TOM40-specific pathway after the action of the MDM12-MMM1 complex. Essential for establishing and maintaining the structure of mitochondria and maintenance of mtDNA nucleoids. This chain is Maintenance of mitochondrial morphology protein 1, found in Postia placenta (strain ATCC 44394 / Madison 698-R) (Brown rot fungus).